The sequence spans 621 residues: tRNA uridine 5-carboxymethylaminomethyl modification enzyme MnmG (621 aa).

9–14 (GGGHAG) is a binding site for FAD. 270 to 284 (GPRYCPSIEDKIVKF) provides a ligand contact to NAD(+).

This sequence belongs to the MnmG family. As to quaternary structure, homodimer. Heterotetramer of two MnmE and two MnmG subunits. Requires FAD as cofactor.

It is found in the cytoplasm. NAD-binding protein involved in the addition of a carboxymethylaminomethyl (cmnm) group at the wobble position (U34) of certain tRNAs, forming tRNA-cmnm(5)s(2)U34. The sequence is that of tRNA uridine 5-carboxymethylaminomethyl modification enzyme MnmG from Borreliella burgdorferi (strain ATCC 35210 / DSM 4680 / CIP 102532 / B31) (Borrelia burgdorferi).